Here is a 182-residue protein sequence, read N- to C-terminus: Ribosome-recycling factor (182 aa).

This sequence belongs to the RRF family.

It is found in the cytoplasm. Its function is as follows. Responsible for the release of ribosomes from messenger RNA at the termination of protein biosynthesis. May increase the efficiency of translation by recycling ribosomes from one round of translation to another. This is Ribosome-recycling factor from Prochlorococcus marinus (strain MIT 9313).